Reading from the N-terminus, the 205-residue chain is Small ribosomal subunit protein uS5 (205 aa).

The region spanning 49-112 is the S5 DRBM domain; sequence LVDEVLDINM…VSAKINLVKV (64 aa).

It belongs to the universal ribosomal protein uS5 family. In terms of assembly, part of the 30S ribosomal subunit. Contacts protein S4.

Functionally, with S4 and S12 plays an important role in translational accuracy. The sequence is that of Small ribosomal subunit protein uS5 from Methanospirillum hungatei JF-1 (strain ATCC 27890 / DSM 864 / NBRC 100397 / JF-1).